Consider the following 633-residue polypeptide: Probable potassium transport system protein Kup 3 (633 aa).

11 consecutive transmembrane segments (helical) span residues 61-81 (LVSL…VLFL), 107-127 (PVLM…DAMI), 143-163 (VAPA…LLLF), 173-193 (VSVF…AAGV), 211-231 (AIGF…AIFL), 255-275 (WFAV…ALVL), 287-307 (LMFP…GTII), 345-365 (IYLP…MLMF), 371-391 (LAPA…ILAF), 402-422 (ALTA…FLGA), and 427-447 (IHHG…MMWT).

This sequence belongs to the HAK/KUP transporter (TC 2.A.72) family.

The protein localises to the cell inner membrane. The catalysed reaction is K(+)(in) + H(+)(in) = K(+)(out) + H(+)(out). In terms of biological role, transport of potassium into the cell. Likely operates as a K(+):H(+) symporter. The protein is Probable potassium transport system protein Kup 3 of Sinorhizobium medicae (strain WSM419) (Ensifer medicae).